Here is a 275-residue protein sequence, read N- to C-terminus: Large ribosomal subunit protein uL2 (275 aa).

2 disordered regions span residues 1-55 (MGIR…RHRG) and 218-275 (PHVR…RRRR). Basic residues predominate over residues 259-275 (TRNKKKASSRLIVRRRR).

This sequence belongs to the universal ribosomal protein uL2 family. As to quaternary structure, part of the 50S ribosomal subunit. Forms a bridge to the 30S subunit in the 70S ribosome.

One of the primary rRNA binding proteins. Required for association of the 30S and 50S subunits to form the 70S ribosome, for tRNA binding and peptide bond formation. It has been suggested to have peptidyltransferase activity; this is somewhat controversial. Makes several contacts with the 16S rRNA in the 70S ribosome. The polypeptide is Large ribosomal subunit protein uL2 (Crocosphaera subtropica (strain ATCC 51142 / BH68) (Cyanothece sp. (strain ATCC 51142))).